The following is a 194-amino-acid chain: Chromophore lyase CpcT/CpeT 1 (194 aa).

It belongs to the CpcT/CpeT biliprotein lyase family.

Its function is as follows. Covalently attaches a chromophore to Cys residue(s) of phycobiliproteins. In Microcystis aeruginosa (strain NIES-843 / IAM M-2473), this protein is Chromophore lyase CpcT/CpeT 1.